The following is a 144-amino-acid chain: Large ribosomal subunit protein uL11 (144 aa).

This sequence belongs to the universal ribosomal protein uL11 family. In terms of assembly, part of the ribosomal stalk of the 50S ribosomal subunit. Interacts with L10 and the large rRNA to form the base of the stalk. L10 forms an elongated spine to which L12 dimers bind in a sequential fashion forming a multimeric L10(L12)X complex. One or more lysine residues are methylated.

Forms part of the ribosomal stalk which helps the ribosome interact with GTP-bound translation factors. The polypeptide is Large ribosomal subunit protein uL11 (Polaromonas sp. (strain JS666 / ATCC BAA-500)).